The following is a 273-amino-acid chain: Type IV secretion system protein PtlF (273 aa).

Residues 1–20 form the signal peptide; the sequence is MMAARMMAAGLAATALSAHA.

It belongs to the TrbG/VirB9 family. In terms of assembly, forms a complex with PtlI.

The protein localises to the cell outer membrane. In terms of biological role, component of the type IV secretion system ptl required for secretion of assembled pertussis toxin (PTX) through the outer membrane. The sequence is that of Type IV secretion system protein PtlF (ptlF) from Bordetella pertussis (strain Tohama I / ATCC BAA-589 / NCTC 13251).